The chain runs to 391 residues: 1-deoxy-D-xylulose 5-phosphate reductoisomerase (391 aa).

Residues T11, G12, S13, I14, and N126 each contribute to the NADPH site. K127 is a binding site for 1-deoxy-D-xylulose 5-phosphate. Residue E128 coordinates NADPH. D152 is a binding site for Mn(2+). Residues S153, E154, S176, and H199 each contribute to the 1-deoxy-D-xylulose 5-phosphate site. E154 contacts Mn(2+). G205 is a binding site for NADPH. Positions 212, 217, 218, and 221 each coordinate 1-deoxy-D-xylulose 5-phosphate. E221 lines the Mn(2+) pocket.

It belongs to the DXR family. Mg(2+) serves as cofactor. The cofactor is Mn(2+).

It carries out the reaction 2-C-methyl-D-erythritol 4-phosphate + NADP(+) = 1-deoxy-D-xylulose 5-phosphate + NADPH + H(+). Its pathway is isoprenoid biosynthesis; isopentenyl diphosphate biosynthesis via DXP pathway; isopentenyl diphosphate from 1-deoxy-D-xylulose 5-phosphate: step 1/6. Catalyzes the NADPH-dependent rearrangement and reduction of 1-deoxy-D-xylulose-5-phosphate (DXP) to 2-C-methyl-D-erythritol 4-phosphate (MEP). The sequence is that of 1-deoxy-D-xylulose 5-phosphate reductoisomerase from Acidithiobacillus ferrooxidans (strain ATCC 53993 / BNL-5-31) (Leptospirillum ferrooxidans (ATCC 53993)).